A 137-amino-acid polypeptide reads, in one-letter code: Small ribosomal subunit protein uS12 (137 aa).

A disordered region spans residues 1–44 (MPTINQLVRKGRKSRTSKSDAPALNFGYNSMKKKATDNPAPQKR). Aspartate 102 is subject to 3-methylthioaspartic acid.

It belongs to the universal ribosomal protein uS12 family. In terms of assembly, part of the 30S ribosomal subunit. Contacts proteins S8 and S17. May interact with IF1 in the 30S initiation complex.

In terms of biological role, with S4 and S5 plays an important role in translational accuracy. Functionally, interacts with and stabilizes bases of the 16S rRNA that are involved in tRNA selection in the A site and with the mRNA backbone. Located at the interface of the 30S and 50S subunits, it traverses the body of the 30S subunit contacting proteins on the other side and probably holding the rRNA structure together. The combined cluster of proteins S8, S12 and S17 appears to hold together the shoulder and platform of the 30S subunit. The polypeptide is Small ribosomal subunit protein uS12 (Latilactobacillus sakei subsp. sakei (strain 23K) (Lactobacillus sakei subsp. sakei)).